Here is a 250-residue protein sequence, read N- to C-terminus: 1-(5-phosphoribosyl)-5-[(5-phosphoribosylamino)methylideneamino] imidazole-4-carboxamide isomerase (250 aa).

D12 functions as the Proton acceptor in the catalytic mechanism. Residue D134 is the Proton donor of the active site.

The protein belongs to the HisA/HisF family.

Its subcellular location is the cytoplasm. It catalyses the reaction 1-(5-phospho-beta-D-ribosyl)-5-[(5-phospho-beta-D-ribosylamino)methylideneamino]imidazole-4-carboxamide = 5-[(5-phospho-1-deoxy-D-ribulos-1-ylimino)methylamino]-1-(5-phospho-beta-D-ribosyl)imidazole-4-carboxamide. Its pathway is amino-acid biosynthesis; L-histidine biosynthesis; L-histidine from 5-phospho-alpha-D-ribose 1-diphosphate: step 4/9. The chain is 1-(5-phosphoribosyl)-5-[(5-phosphoribosylamino)methylideneamino] imidazole-4-carboxamide isomerase from Actinobacillus pleuropneumoniae serotype 3 (strain JL03).